The chain runs to 618 residues: Protease 4 (618 aa).

The Cytoplasmic segment spans residues 1-24; it reads MRTLWRFIAGFFKWTWRVLNFVRE. Residues 25 to 45 traverse the membrane as a helical segment; it reads MVLNLFFIFLVLVGVGIWMQI. The Periplasmic portion of the chain corresponds to 46–618; it reads GNGSNSEQTA…AFCLTCANVR (573 aa). The active-site Proton donor/acceptor is the Lys-209. The active-site Nucleophile is Ser-409.

It belongs to the peptidase S49 family. In terms of assembly, homotetramer.

It localises to the cell inner membrane. Functionally, digests cleaved signal peptides in vitro, its in vivo function is unknown. This activity is necessary to maintain proper secretion of mature proteins across the membrane. The polypeptide is Protease 4 (sppA) (Salmonella typhi).